We begin with the raw amino-acid sequence, 29 residues long: Cytolysin Uc-1 (29 aa).

Over residues 1-15 the composition is skewed to polar residues; it reads DEQTGSKGPNENLPS. The disordered stretch occupies residues 1–29; the sequence is DEQTGSKGPNENLPSQKDLXAKASXLTEV.

It localises to the secreted. The protein localises to the nematocyst. Its subcellular location is the target cell membrane. Pore-forming toxin that lyses bovine erythrocytes at nanomolar concentrations. Is devoid of enzymatic activity. Binds to monolayers and efficiently permeabilizes small lipid vesicles composed of sphingomyelin and cholesterol. The cytolytic activity is not prevented by cholesterol or sphingomyelin. This Urticina crassicornis (Mottled anemone) protein is Cytolysin Uc-1.